The chain runs to 351 residues: Rod outer segment membrane protein 1 (351 aa).

The Cytoplasmic portion of the chain corresponds to 1–19 (MAPVLPLVLPLQPRIRLAQ). The helical transmembrane segment at 20 to 43 (GLWLLSWLLVLVGGLTLLCSGHLL) threads the bilayer. Residues 44-64 (VQLWHLGTFLAPSCPFSALPQ) are Lumenal-facing. The chain crosses the membrane as a helical span at residues 65-84 (VALAASAVALGTGLVGSGAS). The Cytoplasmic portion of the chain corresponds to 85-102 (RASLDAEQYPPWRGVLGP). Residues 103 to 125 (LLVAGTAGGGGLLVLALGLALAL) traverse the membrane as a helical segment. The Lumenal portion of the chain corresponds to 126–264 (PGTLDTGLEE…EVLLGHLQGL (139 aa)). The chain crosses the membrane as a helical span at residues 265–286 (ASTLGNMLAVTFLLQTLVLLGL). The Cytoplasmic portion of the chain corresponds to 287–351 (RYLQTALEGL…KPPKECLPEA (65 aa)). The disordered stretch occupies residues 325–351 (QGAGPHRPAPGETPPEEKPPKECLPEA). Over residues 339 to 351 (PEEKPPKECLPEA) the composition is skewed to basic and acidic residues.

This sequence belongs to the PRPH2/ROM1 family. As to quaternary structure, homodimer; disulfide-linked. Forms a homotetramer. Forms a heterotetramer with PRPH2. Homotetramer and heterotetramer core complexes go on to form higher order complexes by formation of intermolecular disulfide bonds. Interacts with STX3. Interacts with SNAP25. In terms of tissue distribution, retina photoreceptor (at protein level). In rim region of ROS disks (at protein level).

The protein resides in the photoreceptor inner segment membrane. The protein localises to the photoreceptor outer segment membrane. Functionally, plays a role in rod outer segment (ROS) morphogenesis. May play a role with PRPH2 in the maintenance of the structure of ROS curved disks. Plays a role in the organization of the ROS and maintenance of ROS disk diameter. Involved in the maintenance of the retina outer nuclear layer. This Bos taurus (Bovine) protein is Rod outer segment membrane protein 1 (ROM1).